We begin with the raw amino-acid sequence, 372 residues long: Glutamate 5-kinase (372 aa).

Lysine 14 contributes to the ATP binding site. 3 residues coordinate substrate: serine 54, aspartate 141, and asparagine 153. Residue 173 to 174 (TD) participates in ATP binding. The region spanning 280 to 358 (RGTLVLDEGA…DAIVGVLGYM (79 aa)) is the PUA domain.

It belongs to the glutamate 5-kinase family.

It localises to the cytoplasm. The catalysed reaction is L-glutamate + ATP = L-glutamyl 5-phosphate + ADP. It participates in amino-acid biosynthesis; L-proline biosynthesis; L-glutamate 5-semialdehyde from L-glutamate: step 1/2. Functionally, catalyzes the transfer of a phosphate group to glutamate to form L-glutamate 5-phosphate. In Pseudomonas fluorescens (strain ATCC BAA-477 / NRRL B-23932 / Pf-5), this protein is Glutamate 5-kinase.